Here is a 290-residue protein sequence, read N- to C-terminus: Agmatinase (290 aa).

Residues histidine 112, aspartate 135, histidine 137, aspartate 139, aspartate 216, and aspartate 218 each contribute to the Mn(2+) site.

It belongs to the arginase family. Agmatinase subfamily. Mn(2+) is required as a cofactor.

It catalyses the reaction agmatine + H2O = urea + putrescine. It participates in amine and polyamine biosynthesis; putrescine biosynthesis via agmatine pathway; putrescine from agmatine: step 1/1. In terms of biological role, catalyzes the formation of putrescine from agmatine. The sequence is that of Agmatinase (speB) from Bacillus cereus (strain ATCC 14579 / DSM 31 / CCUG 7414 / JCM 2152 / NBRC 15305 / NCIMB 9373 / NCTC 2599 / NRRL B-3711).